The primary structure comprises 1414 residues: DNA-directed RNA polymerase subunit beta' (1414 aa).

Cys-70, Cys-72, Cys-85, and Cys-88 together coordinate Zn(2+). Residues Asp-461, Asp-463, and Asp-465 each coordinate Mg(2+). Zn(2+) contacts are provided by Cys-820, Cys-894, Cys-901, and Cys-904.

This sequence belongs to the RNA polymerase beta' chain family. In terms of assembly, the RNAP catalytic core consists of 2 alpha, 1 beta, 1 beta' and 1 omega subunit. When a sigma factor is associated with the core the holoenzyme is formed, which can initiate transcription. Requires Mg(2+) as cofactor. Zn(2+) is required as a cofactor.

It carries out the reaction RNA(n) + a ribonucleoside 5'-triphosphate = RNA(n+1) + diphosphate. In terms of biological role, DNA-dependent RNA polymerase catalyzes the transcription of DNA into RNA using the four ribonucleoside triphosphates as substrates. The chain is DNA-directed RNA polymerase subunit beta' from Cupriavidus taiwanensis (strain DSM 17343 / BCRC 17206 / CCUG 44338 / CIP 107171 / LMG 19424 / R1) (Ralstonia taiwanensis (strain LMG 19424)).